We begin with the raw amino-acid sequence, 360 residues long: Arginase, non-hepatic 1 (360 aa).

Residues H122, D145, H147, and D149 each contribute to the Mn(2+) site. Substrate contacts are provided by residues 147–151 (HADIN), 158–160 (SGN), and D204. 2 residues coordinate Mn(2+): D253 and D255. Positions 267 and 298 each coordinate substrate.

This sequence belongs to the arginase family. As to quaternary structure, homotrimer. It depends on Mn(2+) as a cofactor. Expressed at differing tadpole stages in tail, intestine, hindlimb and trunk region. Most abundant in tadpole tail.

It carries out the reaction L-arginine + H2O = urea + L-ornithine. It functions in the pathway nitrogen metabolism; urea cycle; L-ornithine and urea from L-arginine: step 1/1. Functionally, as well as its role in the urea cycle, may be involved in tissue remodeling. The chain is Arginase, non-hepatic 1 (arg2-a) from Xenopus laevis (African clawed frog).